The primary structure comprises 80 residues: MNVEEIKDKVFDIIVSKMGVNKDQIKTESKFADDLGADSLDTVELIMELENEFDVQIPDEDAEKISNVQQAIDYIVNAKK.

One can recognise a Carrier domain in the interval 4–79 (EEIKDKVFDI…QAIDYIVNAK (76 aa)). Residue serine 39 is modified to O-(pantetheine 4'-phosphoryl)serine.

It belongs to the acyl carrier protein (ACP) family. In terms of processing, 4'-phosphopantetheine is transferred from CoA to a specific serine of apo-ACP by AcpS. This modification is essential for activity because fatty acids are bound in thioester linkage to the sulfhydryl of the prosthetic group.

It is found in the cytoplasm. The protein operates within lipid metabolism; fatty acid biosynthesis. In terms of biological role, carrier of the growing fatty acid chain in fatty acid biosynthesis. The polypeptide is Acyl carrier protein (Prosthecochloris aestuarii (strain DSM 271 / SK 413)).